A 394-amino-acid polypeptide reads, in one-letter code: MSKEKFERTKPHVNVGTIGHVDHGKTTLTAAICTVLAKVYGGKARDFASIDNAPEERERGITINTSHVEYDTPNRHYAHVDCPGHADYVKNMITGAAQMDGGILVVAATDGRMPQTREHILLGRQVGIPYIIVFMNKCDMVDDEELLELVEMEVRELLSEYDFPGDDLPVIQGSALGALNGEAQWEAKIVELAEALDTYIPEPERAVDMAFLMPIEDVFSIQGRGTVVTGRIERGILKVGDEVAIVGIKETVKTTCTGVEMFRKLLDEGRAGENVGALLRGTKREEVERGQVLAKPGSITPHTKFESEVYVLSKDEGGRHTPFFKGYRPQFYFRTTDVTGSIELPEGVEMVMPGDNVKMVVDLIAPIAMDEGLRFAIREGGRTVGAGVVAKIIA.

In terms of domain architecture, tr-type G spans 10 to 204; that stretch reads KPHVNVGTIG…ALDTYIPEPE (195 aa). Residues 19 to 26 form a G1 region; the sequence is GHVDHGKT. 19–26 contributes to the GTP binding site; it reads GHVDHGKT. Residue Thr26 coordinates Mg(2+). A G2 region spans residues 60 to 64; that stretch reads GITIN. The segment at 81-84 is G3; that stretch reads DCPG. Residues 81–85 and 136–139 each bind GTP; these read DCPGH and NKCD. The interval 136–139 is G4; sequence NKCD. Residues 174–176 form a G5 region; that stretch reads SAL.

Belongs to the TRAFAC class translation factor GTPase superfamily. Classic translation factor GTPase family. EF-Tu/EF-1A subfamily. As to quaternary structure, monomer.

Its subcellular location is the cytoplasm. The enzyme catalyses GTP + H2O = GDP + phosphate + H(+). GTP hydrolase that promotes the GTP-dependent binding of aminoacyl-tRNA to the A-site of ribosomes during protein biosynthesis. In Vibrio cholerae serotype O1 (strain ATCC 39315 / El Tor Inaba N16961), this protein is Elongation factor Tu-A.